The chain runs to 362 residues: Transcriptional repressor PifC (362 aa).

In terms of biological role, transcription repression of its own gene by binding to the PIF operator (pifO) and replication initiation from the primary origin (ori-1). Transcriptional repressor of the pifA and pifB. This chain is Transcriptional repressor PifC (pifC), found in Escherichia coli (strain K12).